Reading from the N-terminus, the 185-residue chain is Signal peptidase I P (185 aa).

At 1 to 14 (MFDKEKRKKSNIID) the chain is on the cytoplasmic side. Residues 15-34 (WIKAILIALILVFLVRTFLF) traverse the membrane as a helical segment. Over 35 to 185 (EPYIVQGESM…FPLDRIRHAK (151 aa)) the chain is Extracellular. Active-site residues include Ser43 and Lys85.

It belongs to the peptidase S26 family.

Its subcellular location is the cell membrane. The catalysed reaction is Cleavage of hydrophobic, N-terminal signal or leader sequences from secreted and periplasmic proteins.. The polypeptide is Signal peptidase I P (sipP) (Bacillus subtilis subsp. natto).